The sequence spans 197 residues: Suppressor of RNA silencing p3 (197 aa).

This sequence belongs to the tenuiviruses p3 protein family. In terms of assembly, homodimer.

It is found in the host cytoplasm. Acts as a suppressor of RNA-mediated gene silencing, also known as post-transcriptional gene silencing (PTGS), presumably through the binding of dsRNA. This Rottboellia (Sorghum) protein is Suppressor of RNA silencing p3.